Consider the following 526-residue polypeptide: Peptide chain release factor 3 (526 aa).

The tr-type G domain occupies N8–Q277. Residues S17–T24, D85–H89, and N139–D142 each bind GTP.

The protein belongs to the TRAFAC class translation factor GTPase superfamily. Classic translation factor GTPase family. PrfC subfamily.

It localises to the cytoplasm. In terms of biological role, increases the formation of ribosomal termination complexes and stimulates activities of RF-1 and RF-2. It binds guanine nucleotides and has strong preference for UGA stop codons. It may interact directly with the ribosome. The stimulation of RF-1 and RF-2 is significantly reduced by GTP and GDP, but not by GMP. The chain is Peptide chain release factor 3 from Histophilus somni (strain 129Pt) (Haemophilus somnus).